A 472-amino-acid chain; its full sequence is Uronate isomerase (472 aa).

The protein belongs to the metallo-dependent hydrolases superfamily. Uronate isomerase family.

It catalyses the reaction D-glucuronate = D-fructuronate. It carries out the reaction aldehydo-D-galacturonate = keto-D-tagaturonate. It participates in carbohydrate metabolism; pentose and glucuronate interconversion. The polypeptide is Uronate isomerase (Xanthomonas axonopodis pv. citri (strain 306)).